A 343-amino-acid polypeptide reads, in one-letter code: Transcription factor MYB83 (343 aa).

Residues 1–16 (MMMRKPDITTIRDKGK) show a composition bias toward basic and acidic residues. Positions 1–33 (MMMRKPDITTIRDKGKPNHACGGNNNKPKLRKG) are disordered. HTH myb-type domains are found at residues 27–79 (KPKL…INYL) and 80–134 (RPDL…KKRL). 2 consecutive DNA-binding regions (H-T-H motif) follow at residues 55-79 (WSDIARNAGLLRCGKSCRLRWINYL) and 107-130 (WSQIATRLPGRTDNEIKNFWNSTL). A disordered region spans residues 134 to 172 (LKNNSNNNTSSGSSPNNSNSNSLDPRDQHVDMGGNSTSL). Residues 136 to 155 (NNSNNNTSSGSSPNNSNSNS) show a composition bias toward low complexity.

In terms of tissue distribution, expressed specifically in fiber and vessel cells that are undergoing secondary wall thickening in floral stems. Expressed in vessels but not in xylary fibers in the developing secondary xylem of roots.

It is found in the nucleus. Its function is as follows. Transcription factor that acts as a molecular switch in the NAC012/SND1-mediated transcriptional network regulating secondary wall biosynthesis. Is directly activated by NAC012/SND1 and its close homologs, including NAC043/NST1, NAC066/NST2, NAC101/VND6 and NAC030/VND7. Is required for functional expression of a number of secondary wall-associated transcription factors and secondary wall biosynthetic genes involved in cellulose, xylan and lignin synthesis. Functions redundantly with MYB46 in the transcriptional regulatory cascade leading to secondary wall formation in fibers and vessels. Transcription activator that binds to the DNA consensus sequence 5'-ACC[AT]A[AC][TC]-3', designated as the secondary wall MYB-responsive element (SMRE). Regulates directly numerous transcription factors and a number of genes involved in secondary wall biosynthesis that contain SMRE elements in their promoters. The polypeptide is Transcription factor MYB83 (Arabidopsis thaliana (Mouse-ear cress)).